The following is a 426-amino-acid chain: 3-phosphoshikimate 1-carboxyvinyltransferase (426 aa).

Residues Lys22, Ser23, and Arg27 each coordinate 3-phosphoshikimate. Lys22 lines the phosphoenolpyruvate pocket. Phosphoenolpyruvate-binding residues include Gly96 and Arg124. 3-phosphoshikimate is bound by residues Ser170, Ser171, Gln172, Ser198, Asp314, Asn337, and Lys341. Residue Gln172 coordinates phosphoenolpyruvate. Asp314 (proton acceptor) is an active-site residue. Phosphoenolpyruvate contacts are provided by Arg345, Arg387, and Lys412.

It belongs to the EPSP synthase family. Monomer.

The protein localises to the cytoplasm. It carries out the reaction 3-phosphoshikimate + phosphoenolpyruvate = 5-O-(1-carboxyvinyl)-3-phosphoshikimate + phosphate. It participates in metabolic intermediate biosynthesis; chorismate biosynthesis; chorismate from D-erythrose 4-phosphate and phosphoenolpyruvate: step 6/7. Functionally, catalyzes the transfer of the enolpyruvyl moiety of phosphoenolpyruvate (PEP) to the 5-hydroxyl of shikimate-3-phosphate (S3P) to produce enolpyruvyl shikimate-3-phosphate and inorganic phosphate. This chain is 3-phosphoshikimate 1-carboxyvinyltransferase, found in Shewanella baltica (strain OS195).